Reading from the N-terminus, the 374-residue chain is MLNRPSSPDGGEAHAWPPDPEIPVFANAEHAHRRPLRWMFALVAVALSCLLATGIWRSRAAPPHAATQTVAPAGQALPPGRIFTVHPREPEPAPLPDMPAAPDPILPQPRPAPPVPPPPIRAPYDYDEPAPRRDSAALKSGPAMMVATAARLGQTERAGMADDGVSADAATLIGRNVSRATRSGDRDYRLLPGTFIDCILQTRIVTNVPGLTTCIVSRDVYSASGKRVLVPRGTTVVGEYRADLAQGSQRIYVAWSRLFMPSGLTIELASPAVDGTGAAGLPGVVDDKFAQRFGGALLLSVLGDATSYMLARATDARHGVNVNLTAAGTMNSLAASALNNTINIPPTLYKNHGDQIGILVARPLDFSILRGTNE.

Residues 38–56 (WMFALVAVALSCLLATGIW) form a helical membrane-spanning segment. A disordered region spans residues 86-117 (HPREPEPAPLPDMPAAPDPILPQPRPAPPVPP). Over residues 92-117 (PAPLPDMPAAPDPILPQPRPAPPVPP) the composition is skewed to pro residues.

The protein belongs to the TrbI/VirB10 family.

The protein resides in the cell membrane. This chain is Type IV secretion system protein PtlG homolog (ptlG), found in Bordetella bronchiseptica (strain ATCC BAA-588 / NCTC 13252 / RB50) (Alcaligenes bronchisepticus).